A 956-amino-acid chain; its full sequence is MDKEKIVIQGARAHNLKNIDVEIPRDKLVVMTGLSGSGKSSLAFDTIYAEGQRRYVESLSAYARQFLGQMDKPDVDLIEGLSPAISIDQKTTSRNPRSTVGTVTEIHDYLRLLYARVGHPVCPNHGIEITSQTIEQMVDRVLEYPEKTRIQIMAPIVSGKKGTHKKTIEEIKKEGYVRIRVDGEIYDINDEIEIEKNKKHSIEIIIDRIVIKEGINTRLYDSIEAALRLADGYAVVEIMGDKELLFSEHYACPYCGFSVGELEPRMFSFNSPFGACPTCDGLGTKLEVDVDTVIPDRSLTLNEGAIVPWRPISSQYYPQMLASACKEFGIDMDTPIEELSKEALDIVLNGSKDKEFYFEYKNDFGMTRETWIPFEGILPNIERRYRETNSDFTRDQMAQYMTDLPCPSCKGYRLKEETLSVKVNNHHIGQISEFSINEALDFFDSLELSEKETQIAAPIFKEVRARLGFLKNVGLDYLTMSRAAGTLSGGEAQRIRLATQIGSRLTGVLYILDEPSIGLHQRDNDRLINTLQSMRDIGNTLIVVEHDEDTMMAADYLIDIGPGAGEHGGRIVAAGTPEEVAKNKNSITGDYLSGKKFIPVPAKRRKGNGLELEIVGAKANNLKNVNAKIPLATFSCVTGVSGSGKSSLVNEVLRKALARKLNRNHAKPGEHKEIKGIENLEKIINIDQSPIGRTPRSNPATYTGAFDDIRDLFASTNEAKVRGYKKGRFSFNVKGGRCEACKGDGIIKIEMHFLPDVYVPCEVCHGKRYNGETLDIRYKGKNIAEVLEMTVEEGLEYFTNQPRIARKLQTIVDVGLGYIRLGQPATTLSGGEAQRVKLASELHKRSNGKSFYILDEPTTGLHADDIGRLLKVLQRLVEENGDTVLVIEHNLDVIKQADYLIDLGPEGGDGGGQIIATGTPEKIARSKKSYTGKYLKPILERDKERTEERIATAKKK.

33 to 40 (GLSGSGKS) provides a ligand contact to ATP. Residues 252-279 (CPYCGFSVGELEPRMFSFNSPFGACPTC) form a C4-type zinc finger. 2 ABC transporter domains span residues 309 to 587 (WRPI…KNSI) and 607 to 936 (GNGL…KYLK). 639–646 (GVSGSGKS) serves as a coordination point for ATP. A C4-type zinc finger spans residues 738-764 (CEACKGDGIIKIEMHFLPDVYVPCEVC).

The protein belongs to the ABC transporter superfamily. UvrA family. Forms a heterotetramer with UvrB during the search for lesions.

It localises to the cytoplasm. Functionally, the UvrABC repair system catalyzes the recognition and processing of DNA lesions. UvrA is an ATPase and a DNA-binding protein. A damage recognition complex composed of 2 UvrA and 2 UvrB subunits scans DNA for abnormalities. When the presence of a lesion has been verified by UvrB, the UvrA molecules dissociate. This Listeria innocua serovar 6a (strain ATCC BAA-680 / CLIP 11262) protein is UvrABC system protein A.